A 367-amino-acid polypeptide reads, in one-letter code: MGDLPTSQQALKVASSGRVILETGHPLPELGADEVLVRVACVALNPYDAKSVDMSPSPGATAGLDFAGEIVALGEAVNSSTRLAVGKRVCGFVFGNNPDRRDNGAFAEYVAVPASLVLCIPDSMTFLEAATLPCGLATTGTALYNSHNLGLPLLRPGSEVNSSNKSSTYVLVYGGGTATATIIIQVLRRSGFIPITTSSPHNFNRLQQLGAEATFDYHSPTCGSDLRDYTHNRLAFAIDCISSTDSMQICYEAIGTAGGRYVSLDPFPLNKHTRRSIRPVWLFSFTIFGSAIKWDTPYNFPARPDDRESAERWYAEIEAILATGELVTHPFQEETGGLSSVIDGIGAVRNGQITGYKLVYPIRNCAY.

NADP(+) contacts are provided by residues 47 to 50 (YDAK), 199 to 202 (SPHN), Tyr217, 264 to 265 (LD), and 353 to 354 (IT).

The protein belongs to the zinc-containing alcohol dehydrogenase family. Monomer.

The protein operates within secondary metabolite biosynthesis. Trans-enoyl reductase; part of the gene cluster that mediates the biosynthesis of oxopyrrolidines, polyketide-amino acid hybrid compounds with feature structures of tetramic acid. The polyketide chain is first assembled by the highly reducing PKS module of opdA using acetyl-CoA as the starter unit and five malonyl-CoA as the extender units. OpdC acts as a trans-acting enoyl reductase and reduces the terminal alkenyl to alkane. The 17R in oxopyrrolidine A and 15R, 17S in oxopyrrolidine B are generated by non-stereospecific catalysis of the ketoreductase (KR) domain and enoyl reductases. Then the polyketides with specific configurations are transferred to the NRPS module of opdA and linked to L-tyrosine to form an amide bond. Finally, the oxopyrrolidines are offloaded through a Dieckmann cyclization catalyzed by the terminal D domain to give a tetramic acid moiety. This is Trans-enoyl reductase opdC from Penicillium oxalicum (strain 114-2 / CGMCC 5302) (Penicillium decumbens).